Reading from the N-terminus, the 935-residue chain is Intimin (935 aa).

A signal peptide spans 1–41 (MITHGFYARTRHKHKLKKTFIMLSAGLGLFFYVNQNSFANG). A peptidoglycan-binding region spans residues 40-153 (NGENYFKLSS…KMTKMSPDAT (114 aa)). The interval 40-153 (NGENYFKLSS…KMTKMSPDAT (114 aa)) is sufficient for homodimerization. The required for periplasmic localization stretch occupies residues 40 to 212 (NGENYFKLSS…LQAWLQHYGT (173 aa)). In terms of domain architecture, LysM spans 63–112 (LFYTLKTGETVSSISKSQGISLSVIWSLNKHLYSSESEMLKAAPGQQIIL). Positions 210–411 (YGTAEVNLQS…LYSMQFRYQF (202 aa)) are inverse autotransporter. The interval 402 to 411 (LYSMQFRYQF) is signature sequence for beta-barrel assembly machinery (BAM), which recognizes the unfolded beta-barrel in the periplasm. 2 consecutive Big-1 domains span residues 560–653 (VTDF…VIFV) and 660–754 (ITEI…VTFF). One can recognise a BIG2 domain in the interval 790–834 (GGNGTYSWHSENTNIATVDESGKVTLKGKGTAVINVTSGDKQTVS). The cysteines at positions 859 and 933 are disulfide-linked.

The protein belongs to the intimin/invasin family. As to quaternary structure, homodimer. Interacts with Tir.

It is found in the cell outer membrane. Functionally, an inverse autotransporter. Adhesin, which mediates attachment to the human intestine epithelial cells. Necessary for the production of attaching and effacing lesions on infected human tissue culture cells. Anchored to the outer membrane by binding to peptidoglycan (PGN) via its periplasmic domain, thus helping in receptor interactions during host invasion. PGN-binding may also aid in resisting mechanical and chemical stress during transit of the bacterium through the gastrointestinal tract of the host. This is Intimin (eae) from Escherichia coli O111:H-.